A 124-amino-acid chain; its full sequence is Cytoinsectotoxin-4 (124 aa).

The signal sequence occupies residues 1–19 (MKCFILAAALVLAFACIAA). A propeptide spanning residues 20-62 (SEPAETENEDLDDLSDLEDEEWLDELEEAAEYLESLREFEESR) is cleaved from the precursor. F123 carries the phenylalanine amide modification.

The protein belongs to the cationic peptide 06 (cytoinsectotoxin) family. In terms of tissue distribution, expressed by the venom gland.

The protein resides in the secreted. Functionally, insecticidal and antimicrobial peptide. Has insecticidal activity against larvae of flesh fly S.carnaria. Has antibacterial activity against Gram-positive bacterium B.subtilis B-501 (MIC=2.5 uM) and Gram-negative bacterium E.coli DH5alpha (MIC=10 uM). The sequence is that of Cytoinsectotoxin-4 from Lachesana tarabaevi (Spider).